Consider the following 86-residue polypeptide: Small ribosomal subunit protein bS20 (86 aa).

Residues 1–27 are disordered; sequence MANSKSAKKRAIQAEKRRQHNASRRSM.

The protein belongs to the bacterial ribosomal protein bS20 family.

Its function is as follows. Binds directly to 16S ribosomal RNA. This chain is Small ribosomal subunit protein bS20, found in Vibrio atlanticus (strain LGP32) (Vibrio splendidus (strain Mel32)).